We begin with the raw amino-acid sequence, 540 residues long: Cytochrome P450 27C1 (540 aa).

Position 486 (C486) interacts with heme.

This sequence belongs to the cytochrome P450 family. Requires heme as cofactor. Following L-thyroxine, expressed in the retinal pigment epithelium (at protein level).

It is found in the membrane. It carries out the reaction all-trans-retinol + 2 reduced [adrenodoxin] + O2 + 2 H(+) = all-trans-3,4-didehydroretinol + 2 oxidized [adrenodoxin] + 2 H2O. Functionally, efficiently catalyzes the conversion of all-trans retinol (also called vitamin A1, the precursor of 11-cis retinal) to 3,4-didehydroretinol (also called vitamin A2, the precursor of 11-cis 3,4-didehydroretinal). Also acts on all-trans retinal and all-trans retinoic acid. The replacement of 11-cis retinal chromophore in photopigments with 11-cis 3,4-didehydroretinal enhances sensitivity to long-wavelength light. This may improve vision in fresh water which is often turbid. In Danio rerio (Zebrafish), this protein is Cytochrome P450 27C1 (cyp27c1).